A 512-amino-acid chain; its full sequence is Dihydroniloticin synthase CYP71CD2 (512 aa).

A helical transmembrane segment spans residues Met1 to Phe21. Asn436 contacts heme.

Belongs to the cytochrome P450 family. It depends on heme as a cofactor. In terms of tissue distribution, mainly expressed in petioles and roots, and, to a lower extent, in leaves.

The protein localises to the membrane. The enzyme catalyses tirucalla-7,24-dien-3beta-ol + 2 reduced [NADPH--hemoprotein reductase] + 2 O2 = dihydroniloticin + 2 oxidized [NADPH--hemoprotein reductase] + 2 H2O + 2 H(+). It participates in secondary metabolite biosynthesis; terpenoid biosynthesis. Monooxygenase involved in the biosynthesis of limonoids triterpene natural products such as azadirachtin, an antifeedant widely used as bioinsecticide, and possessing many medicinal applications including anti-tumoral, anti-malarial, anti-rheumatic, antibacterial, anti-inflammatory, anti-pyretic and diuretic effects. Catalyzes the conversion of tirucalladienol to dihydroniloticin. The polypeptide is Dihydroniloticin synthase CYP71CD2 (Melia azedarach (Chinaberry tree)).